A 1801-amino-acid polypeptide reads, in one-letter code: U3 small nucleolar RNA-associated protein 10 (1801 aa).

Transmembrane regions (helical) follow at residues 102–122 (LALV…EWLI) and 136–156 (ILTF…AILP). An HEAT 1 repeat occupies 581 to 619 (DVDVQALLPFMLIALADPSERVRSGAVDALANIGKVVDK). 2 consecutive transmembrane segments (helical) span residues 939 to 959 (IQSG…AIVN) and 995 to 1015 (ALLL…HSVM). HEAT repeat units follow at residues 1038–1076 (DQTI…AFEH), 1110–1148 (YSMD…DSLK), 1244–1282 (TLTT…QSPE), 1288–1327 (QTRM…KYGK), and 1756–1794 (LALL…VLGE).

Belongs to the HEATR1/UTP10 family. Component of the ribosomal small subunit (SSU) processome.

Its subcellular location is the nucleus. It localises to the nucleolus. The protein resides in the membrane. In terms of biological role, involved in nucleolar processing of pre-18S ribosomal RNA. Involved in ribosome biosynthesis. This chain is U3 small nucleolar RNA-associated protein 10, found in Emericella nidulans (strain FGSC A4 / ATCC 38163 / CBS 112.46 / NRRL 194 / M139) (Aspergillus nidulans).